Here is a 377-residue protein sequence, read N- to C-terminus: 3-dehydroquinate synthase (377 aa).

Residues Gly-113–Asp-117, Thr-137–Thr-138, Lys-150, and Lys-159 each bind NAD(+). The Zn(2+) site is built by Glu-192, His-254, and His-273.

Belongs to the sugar phosphate cyclases superfamily. Dehydroquinate synthase family. Co(2+) serves as cofactor. Requires Zn(2+) as cofactor. NAD(+) is required as a cofactor.

The protein resides in the cytoplasm. The catalysed reaction is 7-phospho-2-dehydro-3-deoxy-D-arabino-heptonate = 3-dehydroquinate + phosphate. Its pathway is metabolic intermediate biosynthesis; chorismate biosynthesis; chorismate from D-erythrose 4-phosphate and phosphoenolpyruvate: step 2/7. In terms of biological role, catalyzes the conversion of 3-deoxy-D-arabino-heptulosonate 7-phosphate (DAHP) to dehydroquinate (DHQ). This is 3-dehydroquinate synthase from Bartonella tribocorum (strain CIP 105476 / IBS 506).